The following is a 205-amino-acid chain: Proteasome subunit beta type-3 (205 aa).

Phosphoserine is present on serine 31. Lysine 70 is covalently cross-linked (Glycyl lysine isopeptide (Lys-Gly) (interchain with G-Cter in ubiquitin)).

Belongs to the peptidase T1B family. In terms of assembly, the 26S proteasome consists of a 20S proteasome core and two 19S regulatory subunits. The 20S proteasome core is composed of 28 subunits that are arranged in four stacked rings, resulting in a barrel-shaped structure. The two end rings are each formed by seven alpha subunits, and the two central rings are each formed by seven beta subunits. The catalytic chamber with the active sites is on the inside of the barrel.

The protein resides in the cytoplasm. Its subcellular location is the nucleus. Functionally, non-catalytic component of the proteasome which degrades poly-ubiquitinated proteins in the cytoplasm and in the nucleus. It is essential for the regulated turnover of proteins and for the removal of misfolded proteins. The proteasome is a multicatalytic proteinase complex that is characterized by its ability to cleave peptides with Arg, Phe, Tyr, Leu, and Glu adjacent to the leaving group at neutral or slightly basic pH. It has an ATP-dependent proteolytic activity. This subunit may participate in the trypsin-like activity of the enzyme complex. This Saccharomyces cerevisiae (strain ATCC 204508 / S288c) (Baker's yeast) protein is Proteasome subunit beta type-3 (PUP3).